We begin with the raw amino-acid sequence, 199 residues long: Transgelin-3 (199 aa).

Residues alanine 24–alanine 136 enclose the Calponin-homology (CH) domain. A Phosphoserine modification is found at serine 163. One copy of the Calponin-like repeat lies at isoleucine 174–methionine 199. Residues leucine 176 to glycine 188 show a composition bias toward polar residues. Residues leucine 176–methionine 199 form a disordered region.

It belongs to the calponin family. Widely expressed in the brain. Expression is increased in the superior frontal cortex of alcoholics, but not in the motor cortex or cerebellum.

The polypeptide is Transgelin-3 (TAGLN3) (Homo sapiens (Human)).